A 62-amino-acid polypeptide reads, in one-letter code: Conotoxin TeAr151 (62 aa).

Residues 1 to 22 form the signal peptide; the sequence is MRCLPVFVVLLLLIASAPSVDA. Positions 23 to 47 are excised as a propeptide; the sequence is QPKTKDDVPLAPLHDNIQNTLQTLR. At Met-55 the chain carries Methionine sulfoxide; partial. Ser-60 bears the Serine amide mark.

Belongs to the conotoxin T superfamily. In terms of processing, contains 2 disulfide bonds. Contains 2 disulfide bonds that can be either 'C1-C3, C2-C4' or 'C1-C4, C2-C3', since these disulfide connectivities have been observed for conotoxins with cysteine framework V (for examples, see AC P0DQQ7 and AC P81755).. In terms of tissue distribution, expressed by the venom duct. Is mostly present in part 5 of the venom duct (distal part near the pharynx), and less abundantly present in part 4 of the venom duct.

It localises to the secreted. This is Conotoxin TeAr151 from Conus textile (Cloth-of-gold cone).